The chain runs to 165 residues: Small ribosomal subunit protein uS5 (165 aa).

The region spanning 10–73 is the S5 DRBM domain; sequence LVEKLVSVDR…EAAKRNMITV (64 aa).

Belongs to the universal ribosomal protein uS5 family. Part of the 30S ribosomal subunit. Contacts proteins S4 and S8.

Functionally, with S4 and S12 plays an important role in translational accuracy. Located at the back of the 30S subunit body where it stabilizes the conformation of the head with respect to the body. The sequence is that of Small ribosomal subunit protein uS5 from Psychrobacter sp. (strain PRwf-1).